Consider the following 245-residue polypeptide: Platelet-derived growth factor subunit B (245 aa).

Positions 1–20 are cleaved as a signal peptide; that stretch reads MNRCWALFLSLCCYLRLVSA. A propeptide spans 21-81 (removed in mature form); it reads EGDPIPEELY…ELESLSRGRR (61 aa). N-linked (GlcNAc...) asparagine glycosylation occurs at Asn-63. Disulfide bonds link Cys-101/Cys-145, Cys-134/Cys-182, and Cys-138/Cys-184. A propeptide spans 195-245 (removed in mature form); the sequence is RSPGSSQEQRARTPQTRVTIRTVRVRRPPKGKHQKFKHTHDKKALKETLGA. Residues 220-235 are compositionally biased toward basic residues; that stretch reads RRPPKGKHQKFKHTHD. Residues 220 to 245 form a disordered region; sequence RRPPKGKHQKFKHTHDKKALKETLGA. Residues 236–245 show a composition bias toward basic and acidic residues; that stretch reads KKALKETLGA.

The protein belongs to the PDGF/VEGF growth factor family. Antiparallel homodimer; disulfide-linked. Antiparallel heterodimer with PDGFA; disulfide-linked. The PDGFB homodimer interacts with PDGFRA and PDGFRB homodimers, and with heterodimers formed by PDGFRA and PDGFRB. The heterodimer composed of PDGFA and PDGFB interacts with PDGFRB homodimers, and with heterodimers formed by PDGFRA and PDGFRB. Interacts with XLKD1. Interacts with LRP1. Interacts with SORL1 (via the N-terminal ectodomain). Interacts with CD82; this interaction inhibits PDGFB-mediated signaling pathway.

The protein localises to the secreted. Growth factor that plays an essential role in the regulation of embryonic development, cell proliferation, cell migration, survival and chemotaxis. Potent mitogen for cells of mesenchymal origin. Required for normal proliferation and recruitment of pericytes and vascular smooth muscle cells in the central nervous system, skin, lung, heart and placenta. Required for normal blood vessel development, and for normal development of kidney glomeruli. Plays an important role in wound healing. Signaling is modulated by the formation of heterodimers with PDGFA. The chain is Platelet-derived growth factor subunit B (PDGFB) from Felis catus (Cat).